Reading from the N-terminus, the 815-residue chain is Lon protease 1 (815 aa).

In terms of domain architecture, Lon N-terminal spans 14-211; that stretch reads IAILPLLGTV…KLNEVLTREL (198 aa). 370-377 contributes to the ATP binding site; it reads GPPGVGKT. Residues 606–787 enclose the Lon proteolytic domain; it reads TDRPGIVTGL…GQVIELALRA (182 aa). Active-site residues include serine 693 and lysine 736.

Belongs to the peptidase S16 family. Homohexamer. Organized in a ring with a central cavity.

Its subcellular location is the cytoplasm. The enzyme catalyses Hydrolysis of proteins in presence of ATP.. ATP-dependent serine protease that mediates the selective degradation of mutant and abnormal proteins as well as certain short-lived regulatory proteins. Required for cellular homeostasis and for survival from DNA damage and developmental changes induced by stress. Degrades polypeptides processively to yield small peptide fragments that are 5 to 10 amino acids long. Binds to DNA in a double-stranded, site-specific manner. This is Lon protease 1 from Herpetosiphon aurantiacus (strain ATCC 23779 / DSM 785 / 114-95).